Consider the following 89-residue polypeptide: Small ribosomal subunit protein uS15 (89 aa).

The protein belongs to the universal ribosomal protein uS15 family. Part of the 30S ribosomal subunit. Forms a bridge to the 50S subunit in the 70S ribosome, contacting the 23S rRNA.

In terms of biological role, one of the primary rRNA binding proteins, it binds directly to 16S rRNA where it helps nucleate assembly of the platform of the 30S subunit by binding and bridging several RNA helices of the 16S rRNA. Its function is as follows. Forms an intersubunit bridge (bridge B4) with the 23S rRNA of the 50S subunit in the ribosome. This is Small ribosomal subunit protein uS15 from Shewanella baltica (strain OS185).